We begin with the raw amino-acid sequence, 221 residues long: UPF0758 protein PC1_4100 (221 aa).

In terms of domain architecture, MPN spans 99–221; sequence AMLNPQATGQ…YVSFAERGWI (123 aa). Zn(2+) is bound by residues His170, His172, and Asp183. The short motif at 170–183 is the JAMM motif element; it reads HNHPSGKAEPSQAD.

It belongs to the UPF0758 family. YicR subfamily.

The sequence is that of UPF0758 protein PC1_4100 from Pectobacterium carotovorum subsp. carotovorum (strain PC1).